The sequence spans 145 residues: Prefoldin subunit alpha (145 aa).

Belongs to the prefoldin alpha subunit family. As to quaternary structure, heterohexamer of two alpha and four beta subunits.

The protein localises to the cytoplasm. In terms of biological role, molecular chaperone capable of stabilizing a range of proteins. Seems to fulfill an ATP-independent, HSP70-like function in archaeal de novo protein folding. The chain is Prefoldin subunit alpha from Nitrosopumilus maritimus (strain SCM1).